The sequence spans 134 residues: Cytochrome b5 (134 aa).

Ala-2 carries the post-translational modification N-acetylalanine. N6-acetyllysine is present on residues Lys-7, Lys-10, and Lys-19. Residues 9–85 enclose the Cytochrome b5 heme-binding domain; it reads VKYYTLEEIQ…SKTFIIGELH (77 aa). Heme-binding residues include His-44 and His-68. The helical transmembrane segment at 109–131 threads the bilayer; that stretch reads WWTNWVIPAISALVVSLMYHFYT.

Belongs to the cytochrome b5 family.

It localises to the endoplasmic reticulum membrane. The protein resides in the microsome membrane. The protein localises to the cytoplasm. In terms of biological role, cytochrome b5 is a membrane-bound hemoprotein functioning as an electron carrier for several membrane-bound oxygenases. In Sus scrofa (Pig), this protein is Cytochrome b5 (CYB5A).